The sequence spans 744 residues: Tripartite motif-containing protein 2 (744 aa).

Position 10 is a phosphoserine (serine 10). Residues 23–64 (CSICLERYKNPKVLPCLHTFCERCLQNYIPAHSLTLSCPVCR) form an RING-type zinc finger. Residues 113–154 (GKPLSCPNHDGNVMDFYCQSCETAMCRECTEGEHAEHPTVPL) form a B box-type zinc finger. The Zn(2+) site is built by cysteine 118, histidine 121, cysteine 141, and histidine 146. A Filamin repeat occupies 320–421 (TTNAVASETV…IRGSPFKLKV (102 aa)). Residue threonine 371 is modified to Phosphothreonine. Serine 375, serine 424, and serine 428 each carry phosphoserine. Residues 432 to 462 (EGVKRRVKSPGSGHVKQKAVKRPASMYSTGK) form a disordered region. NHL repeat units follow at residues 473–516 (IFRV…FSND), 520–563 (KSRF…FSSD), 564–605 (GKFK…FQPN), 609–652 (VTRF…FNQE), 656–699 (MLKF…FDGS), and 700–743 (GSFL…YRYL).

The protein belongs to the TRIM/RBCC family. Forms homooligomers. Interacts with TRIM3; this interaction reduces TRIM2 activity. Interacts with myosin V; myosin V may not be a substrate for ubiquitination. Interacts with NEFL. Interacts with phosphorylated BCL2L11. Interacts with SIRPA. Post-translationally, RING-type zinc finger-dependent and UBE2D1-dependent autoubiquitination.

It localises to the cytoplasm. It catalyses the reaction S-ubiquitinyl-[E2 ubiquitin-conjugating enzyme]-L-cysteine + [acceptor protein]-L-lysine = [E2 ubiquitin-conjugating enzyme]-L-cysteine + N(6)-ubiquitinyl-[acceptor protein]-L-lysine.. It functions in the pathway protein modification; protein ubiquitination. Its function is as follows. UBE2D1-dependent E3 ubiquitin-protein ligase that mediates the ubiquitination of NEFL and of phosphorylated BCL2L11. Plays a neuroprotective function. May play a role in neuronal rapid ischemic tolerance. Plays a role in antiviral immunity and limits New World arenavirus infection independently of its ubiquitin ligase activity. The chain is Tripartite motif-containing protein 2 (TRIM2) from Ailuropoda melanoleuca (Giant panda).